The following is a 276-amino-acid chain: Large ribosomal subunit protein uL2 (276 aa).

The tract at residues 221–276 (RGSAMNPNDHPHGGGEGRAPIGRKSPMTPWGKKARGIKTRDRKKSSNELIIRRRTK) is disordered. Over residues 252-263 (KKARGIKTRDRK) the composition is skewed to basic residues.

This sequence belongs to the universal ribosomal protein uL2 family. In terms of assembly, part of the 50S ribosomal subunit. Forms a bridge to the 30S subunit in the 70S ribosome.

One of the primary rRNA binding proteins. Required for association of the 30S and 50S subunits to form the 70S ribosome, for tRNA binding and peptide bond formation. It has been suggested to have peptidyltransferase activity; this is somewhat controversial. Makes several contacts with the 16S rRNA in the 70S ribosome. This is Large ribosomal subunit protein uL2 from Phytoplasma australiense.